Reading from the N-terminus, the 147-residue chain is Hemoglobin subunit beta (147 aa).

The Globin domain maps to 3–147 (EWTDSERAII…VVSALGREYH (145 aa)). 2 residues coordinate heme b: His-64 and His-93.

Belongs to the globin family. In terms of assembly, heterotetramer of two alpha chains and two beta chains. As to expression, red blood cells.

Its function is as follows. Involved in oxygen transport from gills to the various peripheral tissues. The polypeptide is Hemoglobin subunit beta (hbb) (Gadus morhua (Atlantic cod)).